Consider the following 445-residue polypeptide: Methionine aminopeptidase 2-1 (445 aa).

The interval 1 to 99 (MAAQVPTEAL…FPNKAYPKGE (99 aa)) is disordered. Residues 61–75 (KKKKKRKPKKKKKHP) are compositionally biased toward basic residues. Substrate is bound at residue histidine 198. Aspartate 218, aspartate 229, and histidine 298 together coordinate a divalent metal cation. Residue histidine 306 coordinates substrate. A divalent metal cation is bound by residues glutamate 331 and glutamate 426.

This sequence belongs to the peptidase M24A family. Methionine aminopeptidase eukaryotic type 2 subfamily. Co(2+) is required as a cofactor. Zn(2+) serves as cofactor. Requires Mn(2+) as cofactor. The cofactor is Fe(2+).

Its subcellular location is the cytoplasm. It carries out the reaction Release of N-terminal amino acids, preferentially methionine, from peptides and arylamides.. Functionally, cotranslationally removes the N-terminal methionine from nascent proteins. The N-terminal methionine is often cleaved when the second residue in the primary sequence is small and uncharged (Met-Ala-, Cys, Gly, Pro, Ser, Thr, or Val). This chain is Methionine aminopeptidase 2-1, found in Fusarium vanettenii (strain ATCC MYA-4622 / CBS 123669 / FGSC 9596 / NRRL 45880 / 77-13-4) (Fusarium solani subsp. pisi).